Reading from the N-terminus, the 208-residue chain is Vacuolar iron transporter homolog 5 (208 aa).

The Cytoplasmic segment spans residues 1–41 (MAAMMNNERSSSNKLQVDAENPAAVGDELDLAARANWLRAA). A helical transmembrane segment spans residues 42-62 (VLGANDGLVSTASLMLGVGAV). Over 63–69 (KAEARAM) the chain is Vacuolar. The helical transmembrane segment at 70-90 (VISGFAGLLAGACSMAIGEFV) threads the bilayer. Residues 91–125 (SVCSQRDVELAQLERDGKRGGEEEKALPSPAQAAA) are Cytoplasmic-facing. The helical transmembrane segment at 126-146 (ASAMAFSVGAVVPLLAAGFIV) threads the bilayer. Residues 147–151 (NYRLR) lie on the Vacuolar side of the membrane. The chain crosses the membrane as a helical span at residues 152–172 (IAVVVAVASVALAAFGCVGAV). The Cytoplasmic portion of the chain corresponds to 173 to 184 (LGRAAVARSSAR). The chain crosses the membrane as a helical span at residues 185-205 (VVLGGWAAMGITFGLMRLFKA). At 206 to 208 (SGI) the chain is on the vacuolar side.

This sequence belongs to the CCC1 family.

It localises to the vacuole membrane. It catalyses the reaction Fe(2+)(in) = Fe(2+)(out). Functionally, probable vacuolar iron transporter that may be involved in the regulation of iron distribution throughout the plant. The sequence is that of Vacuolar iron transporter homolog 5 from Oryza sativa subsp. japonica (Rice).